The chain runs to 300 residues: Putative glycosyltransferase ORF300 (300 aa).

This sequence belongs to the glycosyltransferase group 1 family. Glycosyltransferase 4 subfamily.

The chain is Putative glycosyltransferase ORF300 from Acidianus hospitalis (AFV-1).